The primary structure comprises 371 residues: Bifunctional enzyme IspD/IspF (371 aa).

Positions 1–210 (MLDISLIMLS…LNLPKPSWDI (210 aa)) are 2-C-methyl-D-erythritol 4-phosphate cytidylyltransferase. The segment at 211–371 (FNGNGFDVHE…NLKYFDWMKL (161 aa)) is 2-C-methyl-D-erythritol 2,4-cyclodiphosphate synthase. The a divalent metal cation site is built by aspartate 217 and histidine 219. Residues 217 to 219 (DVH) and 243 to 244 (HS) each bind 4-CDP-2-C-methyl-D-erythritol 2-phosphate. Residue histidine 251 participates in a divalent metal cation binding. 4-CDP-2-C-methyl-D-erythritol 2-phosphate is bound by residues 265 to 267 (DIG), 270 to 274 (FPDND), 341 to 344 (TTTE), phenylalanine 348, and arginine 351.

In the N-terminal section; belongs to the IspD/TarI cytidylyltransferase family. IspD subfamily. It in the C-terminal section; belongs to the IspF family. It depends on a divalent metal cation as a cofactor.

It catalyses the reaction 2-C-methyl-D-erythritol 4-phosphate + CTP + H(+) = 4-CDP-2-C-methyl-D-erythritol + diphosphate. The catalysed reaction is 4-CDP-2-C-methyl-D-erythritol 2-phosphate = 2-C-methyl-D-erythritol 2,4-cyclic diphosphate + CMP. Its pathway is isoprenoid biosynthesis; isopentenyl diphosphate biosynthesis via DXP pathway; isopentenyl diphosphate from 1-deoxy-D-xylulose 5-phosphate: step 2/6. It functions in the pathway isoprenoid biosynthesis; isopentenyl diphosphate biosynthesis via DXP pathway; isopentenyl diphosphate from 1-deoxy-D-xylulose 5-phosphate: step 4/6. In terms of biological role, bifunctional enzyme that catalyzes the formation of 4-diphosphocytidyl-2-C-methyl-D-erythritol from CTP and 2-C-methyl-D-erythritol 4-phosphate (MEP) (IspD), and catalyzes the conversion of 4-diphosphocytidyl-2-C-methyl-D-erythritol 2-phosphate (CDP-ME2P) to 2-C-methyl-D-erythritol 2,4-cyclodiphosphate (ME-CPP) with a corresponding release of cytidine 5-monophosphate (CMP) (IspF). The chain is Bifunctional enzyme IspD/IspF from Campylobacter lari (strain RM2100 / D67 / ATCC BAA-1060).